The chain runs to 219 residues: Small ribosomal subunit protein uS3 (219 aa).

In terms of domain architecture, KH type-2 spans 38 to 106; the sequence is IREYINVRLK…RVHINILEVK (69 aa).

Belongs to the universal ribosomal protein uS3 family. Part of the 30S ribosomal subunit. Forms a tight complex with proteins S10 and S14.

Its function is as follows. Binds the lower part of the 30S subunit head. Binds mRNA in the 70S ribosome, positioning it for translation. The polypeptide is Small ribosomal subunit protein uS3 (Bacillus thuringiensis (strain Al Hakam)).